The primary structure comprises 186 residues: Peptidyl-tRNA hydrolase (186 aa).

Tyr-14 contributes to the tRNA binding site. His-19 acts as the Proton acceptor in catalysis. Residues Phe-64, Asn-66, and Asn-112 each coordinate tRNA.

It belongs to the PTH family. In terms of assembly, monomer.

Its subcellular location is the cytoplasm. It catalyses the reaction an N-acyl-L-alpha-aminoacyl-tRNA + H2O = an N-acyl-L-amino acid + a tRNA + H(+). In terms of biological role, hydrolyzes ribosome-free peptidyl-tRNAs (with 1 or more amino acids incorporated), which drop off the ribosome during protein synthesis, or as a result of ribosome stalling. Functionally, catalyzes the release of premature peptidyl moieties from peptidyl-tRNA molecules trapped in stalled 50S ribosomal subunits, and thus maintains levels of free tRNAs and 50S ribosomes. In Anaplasma marginale (strain St. Maries), this protein is Peptidyl-tRNA hydrolase.